The sequence spans 551 residues: Cytochrome P450 monooxygenase FCK2 (551 aa).

A run of 3 helical transmembrane segments spans residues 8–28, 35–55, and 69–89; these read FDPA…VFIF, LHVF…VYIV, and VTTI…ISIL. N-linked (GlcNAc...) asparagine glycosylation occurs at Asn-258. Cys-493 provides a ligand contact to heme.

Belongs to the cytochrome P450 family. Heme serves as cofactor.

It is found in the membrane. The protein operates within secondary metabolite biosynthesis. Its function is as follows. Cytochrome P450 monooxygenase; part of the gene cluster that mediates the biosynthesis of cytokinins such as fusatin, fusatinic acids or 8-oxofusatin, known for their growth promoting and anti-senescence activities toward host plants. FCK1 is a bifunctional enzyme that performs the first steps in the biosynthesis of Fusarium cytokinins. It first condenses adenosine monophosphate (AMP) with dimethylallyl diphosphate (DMAPP) to yield isoprenyl adenosine monophosphate. It then catalyzes the removal of the phosphoribose to produce isopentenylaldehyde. The cytochrome P450 monooxygenase then converts isopentenylaldehyde to trans-zeatin. A condensation step converts trans-zeatin to fusatin which is further modified to produce fusatinic acid. The mechanism for oxidation of fusatin to fusatinic acid remains unknown. 8-oxofusatin could be produced through several pathways, via direct oxygenation of fusatin, or via the 8-oxo-pentenyladenine intermediate which itself must arise from either the prenylation of 8-oxo-AMP by FCK1 and/or oxygenation of isopentenylaldehyde. Both the FCK3 and FCK4 enzymes act downstream of the identified cytokinins to produce yet unidentified compounds. The protein is Cytochrome P450 monooxygenase FCK2 of Fusarium pseudograminearum (strain CS3096) (Wheat and barley crown-rot fungus).